Reading from the N-terminus, the 429-residue chain is C4-dicarboxylate transport protein (429 aa).

Helical transmembrane passes span 3–23 (VSIF…GVLL), 44–64 (LIKM…IAGM), 76–96 (IALL…LVVV), 144–164 (AFAS…GFAL), 184–204 (VIFG…FGAM), 222–242 (LILC…GTIA), 331–351 (TLLV…GSGF), and 352–372 (IVLA…LALI).

Belongs to the dicarboxylate/amino acid:cation symporter (DAACS) (TC 2.A.23) family.

The protein localises to the cell inner membrane. Functionally, responsible for the transport of dicarboxylates such as succinate, fumarate, and malate from the periplasm across the membrane. The chain is C4-dicarboxylate transport protein from Yersinia pestis bv. Antiqua (strain Antiqua).